The following is a 443-amino-acid chain: Serine/threonine-protein phosphatase 2A 55 kDa regulatory subunit B beta isoform (443 aa).

WD repeat units lie at residues 22–61 (TEAD…KNQV), 87–128 (EIEE…KRPE), 171–209 (AHTY…QSFN), and 220–260 (ELTE…CVTG). At serine 275 the chain carries Phosphoserine. 3 WD repeats span residues 279 to 317 (KLSS…RPIE), 334 to 375 (ENDC…DVTL), and 410 to 442 (DFSK…QDKV). The residue at position 298 (threonine 298) is a Phosphothreonine.

It belongs to the phosphatase 2A regulatory subunit B family. As to quaternary structure, PP2A consists of a common heterodimeric core enzyme, composed of a 36 kDa catalytic subunit (subunit C) and a 65 kDa constant regulatory subunit (PR65 or subunit A), that associates with a variety of regulatory subunits. Proteins that associate with the core dimer include three families of regulatory subunits B (the R2/B/PR55/B55, R3/B''/PR72/PR130/PR59 and R5/B'/B56 families), the 48 kDa variable regulatory subunit, viral proteins, and cell signaling molecules. Interacts with TOMM22. Interacts with IER5 (via N- and C-terminal regions). As to expression, brain.

The protein localises to the cytoplasm. It localises to the cytoskeleton. The protein resides in the membrane. Its function is as follows. The B regulatory subunit might modulate substrate selectivity and catalytic activity, and might also direct the localization of the catalytic enzyme to a particular subcellular compartment. This is Serine/threonine-protein phosphatase 2A 55 kDa regulatory subunit B beta isoform (PPP2R2B) from Sus scrofa (Pig).